Reading from the N-terminus, the 232-residue chain is Ubiquinone biosynthesis O-methyltransferase (232 aa).

Arg-36, Gly-55, Asp-76, and Leu-120 together coordinate S-adenosyl-L-methionine.

Belongs to the methyltransferase superfamily. UbiG/COQ3 family.

The enzyme catalyses a 3-demethylubiquinol + S-adenosyl-L-methionine = a ubiquinol + S-adenosyl-L-homocysteine + H(+). It catalyses the reaction a 3-(all-trans-polyprenyl)benzene-1,2-diol + S-adenosyl-L-methionine = a 2-methoxy-6-(all-trans-polyprenyl)phenol + S-adenosyl-L-homocysteine + H(+). It participates in cofactor biosynthesis; ubiquinone biosynthesis. O-methyltransferase that catalyzes the 2 O-methylation steps in the ubiquinone biosynthetic pathway. This Pseudomonas aeruginosa (strain UCBPP-PA14) protein is Ubiquinone biosynthesis O-methyltransferase.